A 215-amino-acid chain; its full sequence is Thiamine-phosphate synthase (215 aa).

Residues 43–47 (QLRDK) and Asn75 contribute to the 4-amino-2-methyl-5-(diphosphooxymethyl)pyrimidine site. Positions 76 and 95 each coordinate Mg(2+). Ser114 is a binding site for 4-amino-2-methyl-5-(diphosphooxymethyl)pyrimidine. A 2-[(2R,5Z)-2-carboxy-4-methylthiazol-5(2H)-ylidene]ethyl phosphate-binding site is contributed by 141–143 (TPT). Position 144 (Lys144) interacts with 4-amino-2-methyl-5-(diphosphooxymethyl)pyrimidine. Gly172 contacts 2-[(2R,5Z)-2-carboxy-4-methylthiazol-5(2H)-ylidene]ethyl phosphate.

It belongs to the thiamine-phosphate synthase family. Mg(2+) is required as a cofactor.

It carries out the reaction 2-[(2R,5Z)-2-carboxy-4-methylthiazol-5(2H)-ylidene]ethyl phosphate + 4-amino-2-methyl-5-(diphosphooxymethyl)pyrimidine + 2 H(+) = thiamine phosphate + CO2 + diphosphate. The catalysed reaction is 2-(2-carboxy-4-methylthiazol-5-yl)ethyl phosphate + 4-amino-2-methyl-5-(diphosphooxymethyl)pyrimidine + 2 H(+) = thiamine phosphate + CO2 + diphosphate. The enzyme catalyses 4-methyl-5-(2-phosphooxyethyl)-thiazole + 4-amino-2-methyl-5-(diphosphooxymethyl)pyrimidine + H(+) = thiamine phosphate + diphosphate. Its pathway is cofactor biosynthesis; thiamine diphosphate biosynthesis; thiamine phosphate from 4-amino-2-methyl-5-diphosphomethylpyrimidine and 4-methyl-5-(2-phosphoethyl)-thiazole: step 1/1. In terms of biological role, condenses 4-methyl-5-(beta-hydroxyethyl)thiazole monophosphate (THZ-P) and 2-methyl-4-amino-5-hydroxymethyl pyrimidine pyrophosphate (HMP-PP) to form thiamine monophosphate (TMP). The protein is Thiamine-phosphate synthase of Streptomyces avermitilis (strain ATCC 31267 / DSM 46492 / JCM 5070 / NBRC 14893 / NCIMB 12804 / NRRL 8165 / MA-4680).